The chain runs to 132 residues: Small ribosomal subunit protein uS8 (132 aa).

It belongs to the universal ribosomal protein uS8 family. In terms of assembly, part of the 30S ribosomal subunit. Contacts proteins S5 and S12.

Its function is as follows. One of the primary rRNA binding proteins, it binds directly to 16S rRNA central domain where it helps coordinate assembly of the platform of the 30S subunit. This Nocardia farcinica (strain IFM 10152) protein is Small ribosomal subunit protein uS8.